Here is a 290-residue protein sequence, read N- to C-terminus: Ribonuclease HIII (290 aa).

An RNase H type-2 domain is found at 78-290 (LPLIGTDEVG…FKNTEKAKNA (213 aa)). 3 residues coordinate a divalent metal cation: aspartate 84, glutamate 85, and aspartate 187.

The protein belongs to the RNase HII family. RnhC subfamily. The cofactor is Mn(2+). Mg(2+) is required as a cofactor.

The protein localises to the cytoplasm. It catalyses the reaction Endonucleolytic cleavage to 5'-phosphomonoester.. Endonuclease that specifically degrades the RNA of RNA-DNA hybrids. The protein is Ribonuclease HIII of Streptococcus pneumoniae (strain P1031).